The chain runs to 119 residues: MSPSVALAVLALLSLSGLEAIQRTPKIQVYSRHPPENGKPNFLNCYVSGFHPSDIEVDLLKNGEKMGKVEHSDLSFSKDWSFYLLYYTEFTPNEKDEYACRVNHVTLSGPRTVKWDRDM.

An N-terminal signal peptide occupies residues 1 to 20 (MSPSVALAVLALLSLSGLEA). Positions 25 to 114 (PKIQVYSRHP…VTLSGPRTVK (90 aa)) constitute an Ig-like C1-type domain. Residues Cys-45 and Cys-100 are joined by a disulfide bond.

The protein belongs to the beta-2-microglobulin family. As to quaternary structure, heterodimer of an alpha chain and a beta chain. Beta-2-microglobulin is the beta-chain of major histocompatibility complex class I molecules.

Its subcellular location is the secreted. Functionally, component of the class I major histocompatibility complex (MHC). Involved in the presentation of peptide antigens to the immune system. This is Beta-2-microglobulin (B2M) from Macaca fascicularis (Crab-eating macaque).